Reading from the N-terminus, the 90-residue chain is MKTAIFTVVLALAVFAVLSFGWEANEKALSEEFTELIHEKEAASEAEARECRYFWGECHDHMPCCDWLVCRYKWPITYNICVWNRTFPEK.

The signal sequence occupies residues 1–19 (MKTAIFTVVLALAVFAVLS). The propeptide occupies 20–50 (FGWEANEKALSEEFTELIHEKEAASEAEARE). 3 cysteine pairs are disulfide-bonded: Cys51/Cys65, Cys58/Cys70, and Cys64/Cys81.

It belongs to the neurotoxin 10 (Hwtx-1) family. 13 (Hntx-13) subfamily. Expressed by the venom gland.

It localises to the secreted. Its function is as follows. Ion channel inhibitor. This is U7-theraphotoxin-Hhn1a 6 from Cyriopagopus hainanus (Chinese bird spider).